Reading from the N-terminus, the 376-residue chain is Probable ATP-dependent RNA helicase YfmL (376 aa).

Residues 35-205 enclose the Helicase ATP-binding domain; it reads AQLIMDGKDV…RELAQEPEVL (171 aa). 48 to 55 is an ATP binding site; sequence SPTGTGKT. The DEAD box signature appears at 153-156; the sequence is DETD. Residues 231 to 374 form the Helicase C-terminal domain; sequence KLLQKLSRLE…EAVYAGGKLK (144 aa).

It belongs to the DEAD box helicase family.

It catalyses the reaction ATP + H2O = ADP + phosphate + H(+). In terms of biological role, a probable DEAD-box RNA helicase that plays a role in ribosomal 50S subunit assembly. May be a non-specific RNA helicase. The sequence is that of Probable ATP-dependent RNA helicase YfmL (yfmL) from Bacillus subtilis (strain 168).